Consider the following 189-residue polypeptide: Protein GrpE (189 aa).

The interval 1 to 21 is disordered; sequence MADEQNLDNQNPETPEQSQAD. Residues 7 to 20 are compositionally biased toward polar residues; it reads LDNQNPETPEQSQA.

It belongs to the GrpE family. In terms of assembly, homodimer.

The protein localises to the cytoplasm. Participates actively in the response to hyperosmotic and heat shock by preventing the aggregation of stress-denatured proteins, in association with DnaK and GrpE. It is the nucleotide exchange factor for DnaK and may function as a thermosensor. Unfolded proteins bind initially to DnaJ; upon interaction with the DnaJ-bound protein, DnaK hydrolyzes its bound ATP, resulting in the formation of a stable complex. GrpE releases ADP from DnaK; ATP binding to DnaK triggers the release of the substrate protein, thus completing the reaction cycle. Several rounds of ATP-dependent interactions between DnaJ, DnaK and GrpE are required for fully efficient folding. This Stutzerimonas stutzeri (strain A1501) (Pseudomonas stutzeri) protein is Protein GrpE.